Consider the following 1262-residue polypeptide: Zinc finger protein 592 (1262 aa).

The disordered stretch occupies residues 23-45 (SLDAKEAIQAPSEENESPLKSSG). A phosphoserine mark is found at serine 78, serine 142, serine 145, and serine 146. Disordered stretches follow at residues 122 to 174 (SFTS…PPPG), 200 to 278 (KKEP…AHSK), and 294 to 494 (VANV…ASTP). Residues lysine 200 and lysine 204 each participate in a glycyl lysine isopeptide (Lys-Gly) (interchain with G-Cter in SUMO2) cross-link. Composition is skewed to basic and acidic residues over residues 213–232 (QQEH…DLDS) and 298–308 (TKEDQPGHTKD). The span at 343–367 (PSDSPRSICSDSSSKGSPSVAASSP) shows a compositional bias: low complexity. Polar residues predominate over residues 454 to 463 (IKTSDSSSPC). The span at 484 to 494 (QQSTAPQASTP) shows a compositional bias: low complexity. The residue at position 529 (serine 529) is a Phosphoserine. Lysine 546 participates in a covalent cross-link: Glycyl lysine isopeptide (Lys-Gly) (interchain with G-Cter in SUMO2). The residue at position 573 (serine 573) is a Phosphoserine. The C2H2-type 1; atypical zinc finger occupies 587–612 (YCCLECGDAFALEKSLSQHYSRRSVH). The C2H2-type 2; atypical zinc finger occupies 615–639 (VLCTLCSKTLLFFNKCSLLRHARDH). Residue serine 691 is modified to Phosphoserine. A C2H2-type 3; degenerate zinc finger spans residues 711–731 (TKCPECHKQMRDYMVLATHFQ). The segment at 740-764 (LTCQVCQMLLPNQCSFCAHQRIHAH) adopts a C2H2-type 4 zinc-finger fold. A C2H2-type 5; atypical zinc finger spans residues 768-790 (YCCPECGVLCRSAYFQTHVKENC). 3 consecutive C2H2-type zinc fingers follow at residues 799–822 (YRCI…QERH), 827–850 (HKCA…TTQH), and 892–915 (FKCP…KNTH). Residues 924–935 (LSSLQSSTDTSS) show a composition bias toward low complexity. The segment at 924-979 (LSSLQSSTDTSSNRPGSRAPAEPPATNVAARGSSLTAGRWGRPEAHRRAEARPRMR) is disordered. The span at 964–976 (GRPEAHRRAEARP) shows a compositional bias: basic and acidic residues. 2 consecutive C2H2-type zinc fingers follow at residues 983–1006 (WTCQ…KKSH) and 1013–1036 (YPCR…RNNH). A C2H2-type 11; atypical zinc finger spans residues 1043–1069 (YTCGYCTEDSPSFPRPSLLESHISLMH). Position 1089 is a phosphoserine (serine 1089). The C2H2-type 12; atypical zinc finger occupies 1124–1146 (FQCAKCTFATDSELEFQSHIPQH). The segment at 1153 to 1176 (AQCLLCGLCYTSTSSLNRHLFIVH) adopts a C2H2-type 13 zinc-finger fold. 2 positions are modified to phosphoserine: serine 1198 and serine 1202. The tract at residues 1222 to 1262 (PLVTDLGGQQGLALDEDSAQDPQNQPQASQDQNSHALSPQV) is disordered. Residues 1241-1262 (QDPQNQPQASQDQNSHALSPQV) are compositionally biased toward polar residues.

Belongs to the krueppel C2H2-type zinc-finger protein family. In terms of assembly, interacts with ZMYND8. Expressed in the brain.

The protein resides in the nucleus. In terms of biological role, may be involved in transcriptional regulation. The chain is Zinc finger protein 592 (Znf592) from Mus musculus (Mouse).